Consider the following 231-residue polypeptide: Orotidine 5'-phosphate decarboxylase (231 aa).

Residues aspartate 11, lysine 33, 60–69, threonine 117, arginine 179, glutamine 187, glycine 207, and arginine 208 contribute to the substrate site; that span reads DLKLHDIPNT. The active-site Proton donor is the lysine 62.

This sequence belongs to the OMP decarboxylase family. Type 1 subfamily. Homodimer.

The enzyme catalyses orotidine 5'-phosphate + H(+) = UMP + CO2. It participates in pyrimidine metabolism; UMP biosynthesis via de novo pathway; UMP from orotate: step 2/2. In terms of biological role, catalyzes the decarboxylation of orotidine 5'-monophosphate (OMP) to uridine 5'-monophosphate (UMP). The polypeptide is Orotidine 5'-phosphate decarboxylase (Ehrlichia chaffeensis (strain ATCC CRL-10679 / Arkansas)).